A 368-amino-acid chain; its full sequence is C2H2 type master regulator of conidiophore development BrlA (368 aa).

The C2H2-type 1; degenerate zinc-finger motif lies at 268–292; that stretch reads CKCDYPGCHKAFRRNEHLKRHKQTF. The C2H2-type 2 zinc finger occupies 300-323; the sequence is FSCEFCGKDQFNRQDNLNNHRKLH. Residues 338 to 368 are disordered; sequence AAVPIIEQEERSRKRRAPPKSKSADKRVDDY. Basic and acidic residues predominate over residues 359–368; that stretch reads KSADKRVDDY.

It is found in the nucleus. Its function is as follows. BrlA, abaA and wetA are pivotal regulators of conidiophore development and conidium maturation. They act individually and together to regulate their own expression and that of numerous other sporulation-specific genes. BrlA, abaA and wetA act together to positively regulate the expression of the Pks1 gene cluster that mediates the biosynthesis of an anthraquinone derivative pigment that contributes to conidial pigmentation that provides protection from UV radiation, heat and cold stress. The sequence is that of C2H2 type master regulator of conidiophore development BrlA from Metarhizium robertsii (strain ARSEF 23 / ATCC MYA-3075) (Metarhizium anisopliae (strain ARSEF 23)).